The following is a 390-amino-acid chain: E3 ubiquitin-protein ligase At4g11680 (390 aa).

Low complexity predominate over residues methionine 1 to serine 19. A disordered region spans residues methionine 1–leucine 39. 5 helical membrane passes run valine 109–isoleucine 129, valine 142–tyrosine 162, methionine 212–leucine 232, isoleucine 244–isoleucine 264, and glycine 265–glutamine 285. Residues cysteine 338–lysine 379 form an RING-type; atypical zinc finger.

The protein resides in the membrane. The enzyme catalyses S-ubiquitinyl-[E2 ubiquitin-conjugating enzyme]-L-cysteine + [acceptor protein]-L-lysine = [E2 ubiquitin-conjugating enzyme]-L-cysteine + N(6)-ubiquitinyl-[acceptor protein]-L-lysine.. The protein operates within protein modification; protein ubiquitination. Functionally, mediates E2-dependent protein ubiquitination in vitro. In Arabidopsis thaliana (Mouse-ear cress), this protein is E3 ubiquitin-protein ligase At4g11680.